The sequence spans 452 residues: Glutathione gamma-glutamylcysteinyltransferase 2 (452 aa).

The 220-residue stretch at 1 to 220 (MSMASLYRRS…GFMLISRPHR (220 aa)) folds into the Peptidase C83 domain. Positions 287-315 (EDVNQNLSSEEKSRLKLKQELLKQVQETK) form a coiled coil.

It belongs to the phytochelatin synthase family. As to expression, expressed in shoots, roots, leaves, stems and flowers.

It carries out the reaction [Glu(-Cys)](n)-Gly + glutathione + H(+) = [Glu(-Cys)](n+1)-Gly + glycine. Its activity is regulated as follows. Requires cadmium for activity. Also activated in heterologous system by AsO(4)(3-) ions, but not by Cu(2+), Zn(2+), Mn(2+) or Ni(2+) ions. Its function is as follows. Involved in the synthesis of phytochelatins (PC) and homophytochelatins (hPC), the heavy-metal-binding peptides of plants. This Arabidopsis thaliana (Mouse-ear cress) protein is Glutathione gamma-glutamylcysteinyltransferase 2 (PCS2).